The primary structure comprises 77 residues: Short neurotoxin OH-32 (77 aa).

The N-terminal stretch at M1–T21 is a signal peptide. Disulfide bonds link C24-C40, C33-C58, C62-C70, and C71-C76.

This sequence belongs to the three-finger toxin family. Short-chain subfamily. Expressed by the venom gland.

The protein localises to the secreted. Functionally, this three-finger toxin binds and inhibits the nicotinic acetylcholine receptor (nAChR). In Ophiophagus hannah (King cobra), this protein is Short neurotoxin OH-32.